The primary structure comprises 188 residues: Inosine triphosphate pyrophosphatase (188 aa).

12–17 (TGNANK) contributes to the ITP binding site. A Mg(2+)-binding site is contributed by Glu40. ITP is bound by residues Lys52, 68–69 (DT), Lys85, 144–147 (FGWD), Lys165, and 170–171 (HR).

The protein belongs to the HAM1 NTPase family. Homodimer. Mg(2+) is required as a cofactor. The cofactor is Mn(2+).

The protein resides in the cytoplasm. Its subcellular location is the nucleus. It catalyses the reaction ITP + H2O = IMP + diphosphate + H(+). The catalysed reaction is dITP + H2O = dIMP + diphosphate + H(+). It carries out the reaction XTP + H2O = XMP + diphosphate + H(+). Pyrophosphatase that hydrolyzes non-canonical purine nucleotides such as inosine triphosphate (ITP), deoxyinosine triphosphate (dITP) or xanthosine 5'-triphosphate (XTP) to their respective monophosphate derivatives. The enzyme does not distinguish between the deoxy- and ribose forms. Probably excludes non-canonical purines from RNA and DNA precursor pools, thus preventing their incorporation into RNA and DNA and avoiding chromosomal lesions. The chain is Inosine triphosphate pyrophosphatase from Podospora anserina (strain S / ATCC MYA-4624 / DSM 980 / FGSC 10383) (Pleurage anserina).